The following is a 185-amino-acid chain: MSNTASLKKEYAERIAPALKNQFQYSSTMQIPVLKKIVINQGLGMAVADKKIIEVAINELTAITGQKAVATVSRKDIANFKLRKKMPIGVMVTLRRERMYEFLEKLVRVALPRIRDFKGIESKFDGRGNYTLGIQEQIIFPEINIDSITKILGMNITFVTSAPTDEEGYALLKEFGLPFKNSKKD.

The protein belongs to the universal ribosomal protein uL5 family. In terms of assembly, part of the 50S ribosomal subunit; part of the 5S rRNA/L5/L18/L25 subcomplex. Contacts the 5S rRNA and the P site tRNA. Forms a bridge to the 30S subunit in the 70S ribosome.

Functionally, this is one of the proteins that bind and probably mediate the attachment of the 5S RNA into the large ribosomal subunit, where it forms part of the central protuberance. In the 70S ribosome it contacts protein S13 of the 30S subunit (bridge B1b), connecting the 2 subunits; this bridge is implicated in subunit movement. Contacts the P site tRNA; the 5S rRNA and some of its associated proteins might help stabilize positioning of ribosome-bound tRNAs. The protein is Large ribosomal subunit protein uL5 of Phocaeicola vulgatus (strain ATCC 8482 / DSM 1447 / JCM 5826 / CCUG 4940 / NBRC 14291 / NCTC 11154) (Bacteroides vulgatus).